Here is a 341-residue protein sequence, read N- to C-terminus: LIM and senescent cell antigen-like-containing domain protein 2 (341 aa).

LIM zinc-binding domains lie at 13–74 (AMCQ…LFAP), 76–133 (CGFC…EKAK), 138–195 (FICQ…KMGI), 196–255 (PICG…LFGD), and 256–315 (VCYN…FPLE). S328 is subject to Phosphoserine.

As to quaternary structure, interacts with integrin-linked protein kinase 1 (ILK) via the first LIM domain, and in competition with LIMS1. Part of the heterotrimeric IPP complex composed of integrin-linked kinase (ILK), LIMS1 or LIMS2, and PARVA. Interacts with TGFB1I1. In terms of tissue distribution, detected in heart, lung, kidney, liver, urinary bladder, fat, skin, skeletal muscle, uterus, large intestine and testis.

It localises to the cell junction. The protein resides in the focal adhesion. The protein localises to the cell membrane. Functionally, adapter protein in a cytoplasmic complex linking beta-integrins to the actin cytoskeleton, bridges the complex to cell surface receptor tyrosine kinases and growth factor receptors. The sequence is that of LIM and senescent cell antigen-like-containing domain protein 2 (Lims2) from Mus musculus (Mouse).